Consider the following 55-residue polypeptide: Large ribosomal subunit protein bL33 (55 aa).

The protein belongs to the bacterial ribosomal protein bL33 family.

The polypeptide is Large ribosomal subunit protein bL33 (Escherichia coli (strain K12 / DH10B)).